The primary structure comprises 582 residues: GPI-anchor transamidase component PIGT (582 aa).

Residues 1 to 25 (MAAAMPLGLPLRLLVLLLVGRGCCG) form the signal peptide. The Lumenal portion of the chain corresponds to 26–529 (CAEGPRDSLR…NLPTPDFSMP (504 aa)). N-linked (GlcNAc...) asparagine glycosylation occurs at asparagine 168. Cystine bridges form between cysteine 199–cysteine 276 and cysteine 230–cysteine 235. 2 N-linked (GlcNAc...) asparagine glycosylation sites follow: asparagine 295 and asparagine 331. Positions 465, 525, 527, and 531 each coordinate a 2-acyl-6-[6-phosphoethanolamine-alpha-D-mannosyl-(1-&gt;2)-6-phosphoethanolamine-alpha-D-mannosyl-(1-&gt;6)-2-phosphoethanolamine-alpha-D-mannosyl-(1-&gt;4)-alpha-D-glucosaminyl]-1-(1-radyl,2-acyl-sn-glycero-3-phospho)-1D-myo-inositol. The chain crosses the membrane as a helical span at residues 530 to 552 (YNVICLTCTVVAVCYGSFYNLLT). Residues 553-582 (RTFHIEEPKSGGLAKRLANLIRRARGVPPL) are Cytoplasmic-facing.

It belongs to the PIGT family. In terms of assembly, heteropentamer. Part of the GPI-anchor transamidase complex, consisting of PIGK, PIGT, PIGS, PIGU and GAA1. The disulfide bond between PIGK/GPI8 and PIGT is important for normal enzyme activity.

Its subcellular location is the endoplasmic reticulum membrane. The protein operates within glycolipid biosynthesis; glycosylphosphatidylinositol-anchor biosynthesis. In terms of biological role, component of the glycosylphosphatidylinositol-anchor (GPI-anchor) transamidase (GPI-T) complex that catalyzes the formation of the linkage between a proprotein and a GPI-anchor and participates in GPI anchored protein biosynthesis. May play a crucial role in GPI-T complex assembly in the luminal layer. Binds GPI-anchor. This Mus musculus (Mouse) protein is GPI-anchor transamidase component PIGT.